Reading from the N-terminus, the 432-residue chain is MTSLYTTLNLTMSIPVVAVALLAAWRLRGPERRRWLIGVGGALLILMILTAVFDNIMISAGLVAYDDSLTSGIRLGVAPIEDFAYAVAAAVFVPSVWALLTASPRVGAEVGSPTVSGRGDALLTRAPEPGDDDEVRTPERPGTPGLLTTLFWSSRPVSWVNTAAPFALAYFLATGGFDLVGVIGTIFFLVPYNLAMYGINDVFDYESDLRNPRKGGVEGSVLERSRHTATLVASAVTTVPFLVYLVLTGTVESSLWLAASAFAVIAYSAKGLRFKEIPFLDSLTSAFHFVSPAIVGWTIAGAELTGGVWACLIAFMLWGAASQAFGAVQDVRFDREADLKSVATVLGARAAVWFALACYVAAVVVLLAAAPWPASGAAFAILPYLATVAAYVGVTDADAERTNEGWKRFLVLNMLAGFCVTQIVLWSVLVWS.

Residues M1 to R140 are beta-cyclase. A run of 3 helical transmembrane segments spans residues L4–A24, L36–I56, and F83–S103. Residues G111–R140 form a disordered region. Residues P141–S432 are elongase/hydratase. The next 7 membrane-spanning stretches (helical) occupy residues Y170–V190, E252–L272, I277–W297, I299–G319, A350–A370, A374–V394, and F409–L429.

This sequence belongs to the UbiA prenyltransferase family. As to quaternary structure, may form a complex with LbtA.

The protein resides in the cell membrane. The enzyme catalyses all-trans-lycopene + dimethylallyl diphosphate + H2O = dihydroisopentenyldehydrorhodopin + diphosphate. It carries out the reaction isopentenyldehydrorhodopin + dimethylallyl diphosphate + H2O = dihydrobisanhydrobacterioruberin + diphosphate. The protein operates within carotenoid biosynthesis. In terms of biological role, involved in the biosynthesis of C(50) beta-cyclic carotenoids. The elongase/hydratase domain catalyzes the elongation of lycopene by attaching a C(5) isoprene unit at C-2, as well as the hydroxylation of the previous end of the molecule. The enzyme acts at both ends of the substrate, and catalyzes the conversion of lycopene to the C(45) intermediate dihydroisopentenyldehydrorhodopin (DH-IDR) and the conversion of isopentenyldehydrorhodopin (IDR) to the C(50) carotenoid dihydrobisanhydrobacterioruberin (DH-BABR). The beta-cyclase domain may produce the C(50) beta-cyclic carotenoid C.p.450 from the C(50) carotenoid dihydrobisanhydrobacterioruberin (DH-BABR). The sequence is that of C(50) beta-cyclic carotenoids biosynthesis protein LbtBC from Dietzia sp. (strain CQ4).